The chain runs to 175 residues: MKSVYPMSSPSSAVFADQGLSGKANQTQPPPPLGLVVPASKPGAKKPLRKNAWQVAPNLLVSFRYAWAGVSYAFATQRNFRIHTFTGVAVITAASLLHLEAIAVAVLALTSCLVMILELLNTALESVVDLTVGQSYHELAKIAKDCAAGAVLLAAIAAVIVGGCLLLPPLLSLMV.

2 consecutive transmembrane segments (helical) span residues Val-55–Ala-75 and Leu-96–Ile-116. The Proton acceptor role is filled by Glu-118. An a divalent metal cation-binding site is contributed by Glu-125. A helical membrane pass occupies residues Val-151–Leu-171.

The protein belongs to the bacterial diacylglycerol kinase family. Requires Mg(2+) as cofactor.

It is found in the cell membrane. It carries out the reaction a 1,2-diacyl-sn-glycerol + ATP = a 1,2-diacyl-sn-glycero-3-phosphate + ADP + H(+). In terms of biological role, catalyzes the ATP-dependent phosphorylation of sn-l,2-diacylglycerol (DAG) to phosphatidic acid. In Synechocystis sp. (strain ATCC 27184 / PCC 6803 / Kazusa), this protein is Diacylglycerol kinase (dgkA).